The following is a 508-amino-acid chain: Galactose-1-phosphate uridylyltransferase (508 aa).

The protein belongs to the galactose-1-phosphate uridylyltransferase type 2 family.

It is found in the cytoplasm. It catalyses the reaction alpha-D-galactose 1-phosphate + UDP-alpha-D-glucose = alpha-D-glucose 1-phosphate + UDP-alpha-D-galactose. It functions in the pathway carbohydrate metabolism; galactose metabolism. The chain is Galactose-1-phosphate uridylyltransferase (galT) from Halalkalibacterium halodurans (strain ATCC BAA-125 / DSM 18197 / FERM 7344 / JCM 9153 / C-125) (Bacillus halodurans).